The primary structure comprises 210 residues: Peroxiredoxin-5, mitochondrial (210 aa).

Residues 1–48 (MLQLGLRVLGCKASSVLRASTCLAGRAGRKEAGWECGGARSFSSSAVT) constitute a mitochondrion transit peptide. The region spanning 52-210 (IKVGDAIPSV…SLAPNILSQL (159 aa)) is the Thioredoxin domain. N6-acetyllysine; alternate is present on Lys-70. At Lys-70 the chain carries N6-succinyllysine; alternate. Lys-71 carries the post-translational modification N6-acetyllysine. The residue at position 79 (Lys-79) is an N6-acetyllysine; alternate. Lys-79 carries the post-translational modification N6-succinyllysine; alternate. The active-site Cysteine sulfenic acid (-SOH) intermediate is Cys-96. Cys-96 is lipidated: S-palmitoyl cysteine. A disulfide bridge links Cys-96 with Cys-200. Lys-112 carries the N6-succinyllysine modification. 2 positions are modified to phosphoserine: Ser-167 and Ser-178. Residues 208-210 (SQL) carry the Microbody targeting signal motif.

It belongs to the peroxiredoxin family. Prx5 subfamily. In terms of assembly, monomer. In terms of processing, S-palmitoylated. Palmitoylation occurs on the active site, inhibiting its reactivity; therefore PRDX5 palmitoylation status determines its antioxidant capacity. Post-translationally, S-palmitoylated. Depalmitoylated by ABHD10. Widely expressed.

The protein resides in the mitochondrion. It is found in the cytoplasm. Its subcellular location is the peroxisome matrix. The enzyme catalyses a hydroperoxide + [thioredoxin]-dithiol = an alcohol + [thioredoxin]-disulfide + H2O. Functionally, thiol-specific peroxidase that catalyzes the reduction of hydrogen peroxide and organic hydroperoxides to water and alcohols, respectively. Plays a role in cell protection against oxidative stress by detoxifying peroxides and as sensor of hydrogen peroxide-mediated signaling events. This is Peroxiredoxin-5, mitochondrial from Mus musculus (Mouse).